The following is a 360-amino-acid chain: uncharacterized protein (360 aa).

The segment at 1–33 (MSGRRKGCSAATASSSSSSPPSRLPPLPGHARR) is disordered.

It belongs to the herpesviridae US22 family.

This is an uncharacterized protein from Human cytomegalovirus (strain AD169) (HHV-5).